The chain runs to 421 residues: MFLLPRFILVSCIIGSLGFDNPPTNVVSHLNGDWFLFGDSRSDCNHVVNTNPRNYSYMDLNPALCDSGKISSKAGNSIFRSFHFTDFYNYTGEGQQIIFYEGVNFTPYHAFKCTTSGSNDIWMQNKGLFYTQVYKNMAVYRSLTFVNVPYVYNGSAQSTALCKSGSLVLNNPAYIAREANFGDYYYKVEADFYLSGCDEYIVPLCIFNGKFLSNTKYYDDSQYYFNKDTGVIYGLNSTETITTGFDFNCHYLVLPSGNYLAISNELLLTVPTKAICLNKRKDFTPVQVVHSRWNNARQSDNMTAVACQPPYCYFRNSTTNYVGVYDINHGDAGFTSILSGLLYDSPCFSQQGVFRYNNVSSVWPLYPYGRCPTAADINTPDVPICVYDPLPLILLGILLGVAVIIIVVLLLYFMVENGTRL.

Positions 1 to 16 are cleaved as a signal peptide; it reads MFLLPRFILVSCIIGS. The interval 7–127 is esterase domain 1; that stretch reads FILVSCIIGS…SNDIWMQNKG (121 aa). Over 17-392 the chain is Virion surface; sequence LGFDNPPTNV…PICVYDPLPL (376 aa). Ser-40 serves as the catalytic Nucleophile. Cysteines 44 and 65 form a disulfide. N-linked (GlcNAc...) asparagine; by host glycosylation is found at Asn-54, Asn-89, Asn-153, Asn-236, and Asn-301. 3 disulfide bridges follow: Cys-113–Cys-162, Cys-197–Cys-276, and Cys-205–Cys-249. The receptor binding stretch occupies residues 128–266; it reads LFYTQVYKNM…GNYLAISNEL (139 aa). Residues 267–379 form an esterase domain 2 region; it reads LLTVPTKAIC…RCPTAADINT (113 aa). Cysteines 307 and 312 form a disulfide. The N-linked (GlcNAc...) asparagine; by host glycan is linked to Asn-316. Active-site charge relay system residues include Asp-326 and His-329. A disulfide bridge links Cys-347 with Cys-371. Asn-358 carries an N-linked (GlcNAc...) asparagine; by host glycan. A helical membrane pass occupies residues 393–413; it reads ILLGILLGVAVIIIVVLLLYF. At 414-421 the chain is on the intravirion side; the sequence is MVENGTRL. N-linked (GlcNAc...) asparagine; by host glycosylation occurs at Asn-417.

It belongs to the influenza type C/coronaviruses hemagglutinin-esterase family. As to quaternary structure, homodimer; disulfide-linked. Forms a complex with the M protein in the pre-Golgi. Associates then with S-M complex to form a ternary complex S-M-HE. N-glycosylated in the host RER.

It localises to the virion membrane. It is found in the host cell membrane. The catalysed reaction is N-acetyl-9-O-acetylneuraminate + H2O = N-acetylneuraminate + acetate + H(+). It catalyses the reaction N-acetyl-4-O-acetylneuraminate + H2O = N-acetylneuraminate + acetate + H(+). In terms of biological role, structural protein that makes short spikes at the surface of the virus. Contains receptor binding and receptor-destroying activities. Mediates de-O-acetylation of N-acetyl-4-O-acetylneuraminic acid, which is probably the receptor determinant recognized by the virus on the surface of erythrocytes and susceptible cells. This receptor-destroying activity is important for virus release as it probably helps preventing self-aggregation and ensures the efficient spread of the progeny virus from cell to cell. May serve as a secondary viral attachment protein for initiating infection, the spike protein being the major one. May become a target for both the humoral and the cellular branches of the immune system. This is Hemagglutinin-esterase from Bos taurus (Bovine).